Consider the following 55-residue polypeptide: ATP synthase protein 8 (55 aa).

Residues 8–28 (WWIVNFSLIWASVLIVISLLL) traverse the membrane as a helical segment. The interval 34–55 (NSAGQSSSSLTLNKTTTNWQWL) is disordered. A compositionally biased stretch (low complexity) spans 39–55 (SSSSLTLNKTTTNWQWL).

It belongs to the ATPase protein 8 family. F-type ATPases have 2 components, CF(1) - the catalytic core - and CF(0) - the membrane proton channel.

The protein resides in the mitochondrion membrane. Functionally, mitochondrial membrane ATP synthase (F(1)F(0) ATP synthase or Complex V) produces ATP from ADP in the presence of a proton gradient across the membrane which is generated by electron transport complexes of the respiratory chain. F-type ATPases consist of two structural domains, F(1) - containing the extramembraneous catalytic core and F(0) - containing the membrane proton channel, linked together by a central stalk and a peripheral stalk. During catalysis, ATP synthesis in the catalytic domain of F(1) is coupled via a rotary mechanism of the central stalk subunits to proton translocation. Part of the complex F(0) domain. Minor subunit located with subunit a in the membrane. The polypeptide is ATP synthase protein 8 (MT-ATP8) (Strongylocentrotus purpuratus (Purple sea urchin)).